Reading from the N-terminus, the 503-residue chain is ATP synthase subunit alpha (503 aa).

An ATP-binding site is contributed by 170–177; it reads GDRQTGKT.

Belongs to the ATPase alpha/beta chains family. F-type ATPases have 2 components, CF(1) - the catalytic core - and CF(0) - the membrane proton channel. CF(1) has five subunits: alpha(3), beta(3), gamma(1), delta(1), epsilon(1). CF(0) has three main subunits: a(1), b(2) and c(9-12). The alpha and beta chains form an alternating ring which encloses part of the gamma chain. CF(1) is attached to CF(0) by a central stalk formed by the gamma and epsilon chains, while a peripheral stalk is formed by the delta and b chains.

It localises to the cell inner membrane. It catalyses the reaction ATP + H2O + 4 H(+)(in) = ADP + phosphate + 5 H(+)(out). Its function is as follows. Produces ATP from ADP in the presence of a proton gradient across the membrane. The alpha chain is a regulatory subunit. This Pseudothermotoga lettingae (strain ATCC BAA-301 / DSM 14385 / NBRC 107922 / TMO) (Thermotoga lettingae) protein is ATP synthase subunit alpha.